A 152-amino-acid polypeptide reads, in one-letter code: UPF0735 ACT domain-containing protein CTC_00116 (152 aa).

In terms of domain architecture, ACT spans Ile76 to Met151.

Belongs to the UPF0735 family.

In Clostridium tetani (strain Massachusetts / E88), this protein is UPF0735 ACT domain-containing protein CTC_00116.